Here is a 419-residue protein sequence, read N- to C-terminus: Putative competence-damage inducible protein (419 aa).

It belongs to the CinA family.

The sequence is that of Putative competence-damage inducible protein from Streptococcus agalactiae serotype Ia (strain ATCC 27591 / A909 / CDC SS700).